Reading from the N-terminus, the 86-residue chain is Toxin Td8 (86 aa).

The signal sequence occupies residues methionine 1–cysteine 20. The 63-residue stretch at lysine 21–arginine 83 folds into the LCN-type CS-alpha/beta domain. Disulfide bonds link cysteine 31/cysteine 82, cysteine 35/cysteine 57, cysteine 43/cysteine 63, and cysteine 47/cysteine 65. Arginine 83 bears the Arginine amide mark.

Expressed by the venom gland.

Its subcellular location is the secreted. In terms of biological role, beta toxins bind voltage-independently at site-4 of sodium channels (Nav) and shift the voltage of activation toward more negative potentials thereby affecting sodium channel activation and promoting spontaneous and repetitive firing. The sequence is that of Toxin Td8 from Tityus discrepans (Venezuelan scorpion).